The primary structure comprises 141 residues: Large ribosomal subunit protein uL11 (141 aa).

It belongs to the universal ribosomal protein uL11 family. Part of the ribosomal stalk of the 50S ribosomal subunit. Interacts with L10 and the large rRNA to form the base of the stalk. L10 forms an elongated spine to which L12 dimers bind in a sequential fashion forming a multimeric L10(L12)X complex. Post-translationally, one or more lysine residues are methylated.

In terms of biological role, forms part of the ribosomal stalk which helps the ribosome interact with GTP-bound translation factors. This Lactococcus lactis subsp. lactis (strain IL1403) (Streptococcus lactis) protein is Large ribosomal subunit protein uL11.